The chain runs to 498 residues: ATP synthase subunit beta, chloroplastic (498 aa).

ATP is bound at residue 172-179 (GGAGVGKT).

It belongs to the ATPase alpha/beta chains family. As to quaternary structure, F-type ATPases have 2 components, CF(1) - the catalytic core - and CF(0) - the membrane proton channel. CF(1) has five subunits: alpha(3), beta(3), gamma(1), delta(1), epsilon(1). CF(0) has four main subunits: a(1), b(1), b'(1) and c(9-12).

It localises to the plastid. It is found in the chloroplast thylakoid membrane. The enzyme catalyses ATP + H2O + 4 H(+)(in) = ADP + phosphate + 5 H(+)(out). Its function is as follows. Produces ATP from ADP in the presence of a proton gradient across the membrane. The catalytic sites are hosted primarily by the beta subunits. This Phoenix dactylifera (Date palm) protein is ATP synthase subunit beta, chloroplastic.